Reading from the N-terminus, the 349-residue chain is 4-hydroxythreonine-4-phosphate dehydrogenase (349 aa).

Substrate contacts are provided by His141 and Thr142. Residues His176, His221, and His276 each contribute to the a divalent metal cation site. Lys284, Asn293, and Arg302 together coordinate substrate.

The protein belongs to the PdxA family. As to quaternary structure, homodimer. The cofactor is Zn(2+). It depends on Mg(2+) as a cofactor. Co(2+) serves as cofactor.

The protein localises to the cytoplasm. It catalyses the reaction 4-(phosphooxy)-L-threonine + NAD(+) = 3-amino-2-oxopropyl phosphate + CO2 + NADH. It participates in cofactor biosynthesis; pyridoxine 5'-phosphate biosynthesis; pyridoxine 5'-phosphate from D-erythrose 4-phosphate: step 4/5. Catalyzes the NAD(P)-dependent oxidation of 4-(phosphooxy)-L-threonine (HTP) into 2-amino-3-oxo-4-(phosphooxy)butyric acid which spontaneously decarboxylates to form 3-amino-2-oxopropyl phosphate (AHAP). This chain is 4-hydroxythreonine-4-phosphate dehydrogenase, found in Methylorubrum extorquens (strain PA1) (Methylobacterium extorquens).